We begin with the raw amino-acid sequence, 299 residues long: Homeobox protein Nkx-2.5 (299 aa).

Residues 90–119 (KDPKDHKKDICPLQKTLEHDKREAEDPERP) are compositionally biased toward basic and acidic residues. Positions 90-128 (KDPKDHKKDICPLQKTLEHDKREAEDPERPRQRKRRKPR) are disordered. Positions 124–183 (RRKPRVLFSQAQVYELERRFKQQKYLSAPERDHLANVLKLTSTQVKIWFQNRRYKCKRQR) form a DNA-binding region, homeobox.

The protein belongs to the NK-2 homeobox family. As to quaternary structure, homodimer (via the homeobox); binds DNA as homodimer. Heart and gut tissue.

It localises to the nucleus. Transcription factor required for the development of the heart and the spleen. Implicated in commitment to and/or differentiation of the myocardial lineage. May regulate the expression of genes involved in cardiogenesis and play a role in the formation of gut and the pharyngeal region. Binds to the core DNA motif of promoter. The protein is Homeobox protein Nkx-2.5 (nkx-2.5) of Xenopus laevis (African clawed frog).